The following is a 446-amino-acid chain: Putative F-box protein At1g32660 (446 aa).

Composition is skewed to basic and acidic residues over residues 1–12 and 43–57; these read MKRKDDDQEDRS and NKLE…NPSK. Residues 1–57 are disordered; it reads MKRKDDDQEDRSCSSASKLDPIPLDLKMATVPTKSHMKKSHQNKLEEDEKEDTNPSK. Residues 57–107 enclose the F-box domain; that stretch reads KLELDSLPLDLKMAILTRIPAKSLMKLRCVSKMWSSIIRSRGFIDSYYAIS.

The chain is Putative F-box protein At1g32660 from Arabidopsis thaliana (Mouse-ear cress).